A 394-amino-acid chain; its full sequence is Acetyl-CoA acetyltransferase (394 aa).

Cys88 acts as the Acyl-thioester intermediate in catalysis. Catalysis depends on proton acceptor residues His349 and Cys379.

This sequence belongs to the thiolase-like superfamily. Thiolase family.

The protein localises to the cytoplasm. The catalysed reaction is 2 acetyl-CoA = acetoacetyl-CoA + CoA. The protein operates within metabolic intermediate biosynthesis; (R)-mevalonate biosynthesis; (R)-mevalonate from acetyl-CoA: step 1/3. In Escherichia coli (strain K12), this protein is Acetyl-CoA acetyltransferase (atoB).